A 442-amino-acid polypeptide reads, in one-letter code: Proline--tRNA ligase (442 aa).

This sequence belongs to the class-II aminoacyl-tRNA synthetase family. ProS type 2 subfamily. In terms of assembly, homodimer.

The protein resides in the cytoplasm. It catalyses the reaction tRNA(Pro) + L-proline + ATP = L-prolyl-tRNA(Pro) + AMP + diphosphate. Its function is as follows. Catalyzes the attachment of proline to tRNA(Pro) in a two-step reaction: proline is first activated by ATP to form Pro-AMP and then transferred to the acceptor end of tRNA(Pro). This is Proline--tRNA ligase from Mesorhizobium japonicum (strain LMG 29417 / CECT 9101 / MAFF 303099) (Mesorhizobium loti (strain MAFF 303099)).